Here is a 380-residue protein sequence, read N- to C-terminus: S-adenosylmethionine:tRNA ribosyltransferase-isomerase (380 aa).

Residues 1 to 15 (MHSKHPTDTARRCET) show a composition bias toward basic and acidic residues. The segment at 1–24 (MHSKHPTDTARRCETGTDSSDTAA) is disordered.

The protein belongs to the QueA family. In terms of assembly, monomer.

The protein localises to the cytoplasm. The enzyme catalyses 7-aminomethyl-7-carbaguanosine(34) in tRNA + S-adenosyl-L-methionine = epoxyqueuosine(34) in tRNA + adenine + L-methionine + 2 H(+). It participates in tRNA modification; tRNA-queuosine biosynthesis. In terms of biological role, transfers and isomerizes the ribose moiety from AdoMet to the 7-aminomethyl group of 7-deazaguanine (preQ1-tRNA) to give epoxyqueuosine (oQ-tRNA). In Oleidesulfovibrio alaskensis (strain ATCC BAA-1058 / DSM 17464 / G20) (Desulfovibrio alaskensis), this protein is S-adenosylmethionine:tRNA ribosyltransferase-isomerase.